Consider the following 201-residue polypeptide: Small ribosomal subunit protein uS4c (201 aa).

The interval 20–44 is disordered; the sequence is GLTSKRPTVGSELRNQSRSTKKSQY. The S4 RNA-binding domain occupies 89–150; sequence MRLDNILFRL…NKKSKTLIQN (62 aa).

This sequence belongs to the universal ribosomal protein uS4 family. Part of the 30S ribosomal subunit. Contacts protein S5. The interaction surface between S4 and S5 is involved in control of translational fidelity.

It is found in the plastid. It localises to the chloroplast. Its function is as follows. One of the primary rRNA binding proteins, it binds directly to 16S rRNA where it nucleates assembly of the body of the 30S subunit. In terms of biological role, with S5 and S12 plays an important role in translational accuracy. This Lotus japonicus (Lotus corniculatus var. japonicus) protein is Small ribosomal subunit protein uS4c (rps4).